The primary structure comprises 345 residues: Selenide, water dikinase (345 aa).

The active site involves Cys15. Residues Lys18 and 46 to 48 (SKD) contribute to the ATP site. Asp49 is a Mg(2+) binding site. ATP contacts are provided by residues Asp66, Asp89, and 137–139 (GHS). Residue Asp89 coordinates Mg(2+). Asp225 provides a ligand contact to Mg(2+).

This sequence belongs to the selenophosphate synthase 1 family. Class I subfamily. Homodimer. It depends on Mg(2+) as a cofactor.

It carries out the reaction hydrogenselenide + ATP + H2O = selenophosphate + AMP + phosphate + 2 H(+). In terms of biological role, synthesizes selenophosphate from selenide and ATP. This Aeromonas salmonicida (strain A449) protein is Selenide, water dikinase.